A 256-amino-acid polypeptide reads, in one-letter code: Pimeloyl-[acyl-carrier protein] methyl ester esterase (256 aa).

One can recognise an AB hydrolase-1 domain in the interval 15–242 (HLVLLHGWGL…AAHAPFISHP (228 aa)). Residues Trp22, 82–83 (SL), and 143–147 (FLALQ) contribute to the substrate site. Ser82 (nucleophile) is an active-site residue. Active-site residues include Asp207 and His235. His235 provides a ligand contact to substrate.

It belongs to the AB hydrolase superfamily. Carboxylesterase BioH family. Monomer.

Its subcellular location is the cytoplasm. It carries out the reaction 6-carboxyhexanoyl-[ACP] methyl ester + H2O = 6-carboxyhexanoyl-[ACP] + methanol + H(+). The protein operates within cofactor biosynthesis; biotin biosynthesis. Its function is as follows. The physiological role of BioH is to remove the methyl group introduced by BioC when the pimeloyl moiety is complete. It allows to synthesize pimeloyl-ACP via the fatty acid synthetic pathway through the hydrolysis of the ester bonds of pimeloyl-ACP esters. In Escherichia coli O8 (strain IAI1), this protein is Pimeloyl-[acyl-carrier protein] methyl ester esterase.